The chain runs to 460 residues: uncharacterized protein (460 aa).

In terms of domain architecture, TRAM spans 6–64; that stretch reads PVKKNSTYNLYITGMGTKGEGIGKINNFTIFVTGAILGEEVEVNIIKVNKNYAVGKLLN. 4 residues coordinate [4Fe-4S] cluster: Cys77, Cys83, Cys86, and Cys163. Residues Gln287, Tyr316, Glu337, and Asp385 each contribute to the S-adenosyl-L-methionine site. Catalysis depends on Cys412, which acts as the Nucleophile.

The protein belongs to the class I-like SAM-binding methyltransferase superfamily. RNA M5U methyltransferase family.

This is an uncharacterized protein from Clostridium tetani (strain Massachusetts / E88).